A 465-amino-acid chain; its full sequence is Probable protein phosphatase 2C 71 (465 aa).

Disordered stretches follow at residues 14-47, 68-119, and 133-191; these read RPCK…ACRA, RPRD…GEVT, and SGGA…PAEE. Pro residues predominate over residues 18 to 30; that stretch reads LAPPPPPPLPVSP. Low complexity-rich tracts occupy residues 84 to 106 and 133 to 143; these read AVAP…AAAE and SGGAEATATSG. The region spanning 222-460 is the PPM-type phosphatase domain; sequence ASGAAILPHP…DDIAVVVSIV (239 aa). Residues Asp-254, Gly-255, Asp-384, and Asp-451 each coordinate Mn(2+).

It belongs to the PP2C family. Mg(2+) serves as cofactor. Mn(2+) is required as a cofactor.

It catalyses the reaction O-phospho-L-seryl-[protein] + H2O = L-seryl-[protein] + phosphate. It carries out the reaction O-phospho-L-threonyl-[protein] + H2O = L-threonyl-[protein] + phosphate. In Oryza sativa subsp. japonica (Rice), this protein is Probable protein phosphatase 2C 71.